Consider the following 411-residue polypeptide: Keratin, type I cytoskeletal 12 (411 aa).

The segment at 1–42 (DHDYEFPGIQAFAGLGMGFGGSPGGGSLYLPSGNDGGLLSGS) is head. A coil 1A region spans residues 43 to 78 (EKETMQNLNDRLASYLDKVRALEDANAELENKIREW). Positions 43–359 (EKETMQNLND…RLLDGEAQGD (317 aa)) constitute an IF rod domain. The segment at 83-101 (GHGHGDCGPQHDYSKYHPL) is linker 1. A coil 1B region spans residues 102–193 (IEDLRNKIIS…KNHEEELQSC (92 aa)). The linker 12 stretch occupies residues 194-216 (RAGGPGEVSVEMDAAPGVDLTRL). The tract at residues 217 to 354 (LNDMRAQYEA…IETYRRLLDG (138 aa)) is coil 2. The tract at residues 355-411 (EAQGDGLDESSAMTGSRSQAQSIDSSKDPSKTRKIKTIVQEVVNGEVVSSQVQEIQN) is tail. The tract at residues 356-387 (AQGDGLDESSAMTGSRSQAQSIDSSKDPSKTR) is disordered. The segment covering 365–378 (SAMTGSRSQAQSID) has biased composition (polar residues).

This sequence belongs to the intermediate filament family. As to quaternary structure, heterotetramer of two type I and two type II keratins. Keratin-3 associates with keratin-12. In terms of tissue distribution, cornea specific. Associated mainly with all layers of the central corneal epithelium and also found in the suprabasal limbal epithelium.

In terms of biological role, involved in corneal epithelium organization, integrity and corneal keratin expression. This is Keratin, type I cytoskeletal 12 (KRT12) from Oryctolagus cuniculus (Rabbit).